The following is a 277-amino-acid chain: 2-dehydro-3-deoxyphosphooctonate aldolase (277 aa).

It belongs to the KdsA family.

The protein localises to the cytoplasm. It carries out the reaction D-arabinose 5-phosphate + phosphoenolpyruvate + H2O = 3-deoxy-alpha-D-manno-2-octulosonate-8-phosphate + phosphate. Its pathway is carbohydrate biosynthesis; 3-deoxy-D-manno-octulosonate biosynthesis; 3-deoxy-D-manno-octulosonate from D-ribulose 5-phosphate: step 2/3. The protein operates within bacterial outer membrane biogenesis; lipopolysaccharide biosynthesis. This Alkalilimnicola ehrlichii (strain ATCC BAA-1101 / DSM 17681 / MLHE-1) protein is 2-dehydro-3-deoxyphosphooctonate aldolase.